The sequence spans 1588 residues: Ubiquitin carboxyl-terminal hydrolase 54 (1588 aa).

An Omega-N-methylarginine modification is found at R12. A USP domain is found at 31-352 (KGLSNEPGQN…QPLLLLYADP (322 aa)). C42 (nucleophile) is an active-site residue. 12 residues coordinate Zn(2+): H67, C69, C74, C77, H133, C145, C150, H153, C166, C169, C225, and C229. The active-site Proton acceptor is the H302. Composition is skewed to basic and acidic residues over residues 382-391 (GHLTDSECNQ) and 424-434 (SEGETLKEKQA). 3 disordered regions span residues 382–519 (GHLT…PTWR), 555–577 (FTPD…RSQH), and 601–624 (ESGY…PPDS). At S424 the chain carries Phosphoserine. Positions 453–471 (TVSNMIHSRPSLASQTSAG) are enriched in polar residues. Residues 499 to 513 (TESTSSEAKSSSSSK) show a composition bias toward low complexity. A compositionally biased stretch (basic and acidic residues) spans 555–572 (FTPDEVSKPTANDIKDGG). Positions 601–616 (ESGYESSERNSSSPVS) are enriched in low complexity. 2 positions are modified to phosphoserine: S613 and S616. The stretch at 682 to 712 (ELDELQEEVVRRAQEQELRKKREKELEAAKG) forms a coiled coil. Disordered stretches follow at residues 801–834 (RSLQ…PQPT), 1089–1182 (QNTS…PDMY), 1221–1242 (SQVK…SHPR), and 1491–1561 (WGNL…RSPG). Over residues 808–826 (QQQASSQQPVQPSASLPSQ) the composition is skewed to low complexity. Positions 1126–1147 (GREHCRWVKQPRSPDGRERPPC) are enriched in basic and acidic residues. Phosphoserine is present on S1138. A compositionally biased stretch (polar residues) spans 1510-1524 (PSSNLHVPLRSTWNS). The span at 1536–1547 (RRIDMPPDDDWR) shows a compositional bias: basic and acidic residues.

It belongs to the peptidase C19 family.

It carries out the reaction Thiol-dependent hydrolysis of ester, thioester, amide, peptide and isopeptide bonds formed by the C-terminal Gly of ubiquitin (a 76-residue protein attached to proteins as an intracellular targeting signal).. In terms of biological role, deubiquitinase that specifically mediates 'Lys-63'-linked deubiquitination of substrates with a polyubiquitin chain composed of at least 3 ubiquitins. Specifically recognizes ubiquitin chain in position S2 and catalyzes cleavage of polyubiquitin within 'Lys-63'-linked chains. Not able to deubiquitinate substrates with shorter ubiquitin chains. Mediates deubiquitination of PLK4, maintaining PLK4 stability by reducing its ubiquitination-mediated degradation. The polypeptide is Ubiquitin carboxyl-terminal hydrolase 54 (Usp54) (Mus musculus (Mouse)).